A 227-amino-acid polypeptide reads, in one-letter code: Ribose-5-phosphate isomerase A (227 aa).

Substrate is bound by residues 26–29, 82–85, and 95–98; these read TGST, DGAD, and KGGG. E104 serves as the catalytic Proton acceptor. Position 122 (K122) interacts with substrate.

Belongs to the ribose 5-phosphate isomerase family. Homodimer.

It carries out the reaction aldehydo-D-ribose 5-phosphate = D-ribulose 5-phosphate. The protein operates within carbohydrate degradation; pentose phosphate pathway; D-ribose 5-phosphate from D-ribulose 5-phosphate (non-oxidative stage): step 1/1. Catalyzes the reversible conversion of ribose-5-phosphate to ribulose 5-phosphate. This chain is Ribose-5-phosphate isomerase A, found in Streptococcus equi subsp. zooepidemicus (strain MGCS10565).